The chain runs to 207 residues: Large ribosomal subunit protein uL4 (207 aa).

A disordered region spans residues 58–78 (AGGGKKPWRQKGTGRARHGSI). Over residues 63-77 (KPWRQKGTGRARHGS) the composition is skewed to basic residues.

The protein belongs to the universal ribosomal protein uL4 family. Part of the 50S ribosomal subunit.

One of the primary rRNA binding proteins, this protein initially binds near the 5'-end of the 23S rRNA. It is important during the early stages of 50S assembly. It makes multiple contacts with different domains of the 23S rRNA in the assembled 50S subunit and ribosome. Its function is as follows. Forms part of the polypeptide exit tunnel. The chain is Large ribosomal subunit protein uL4 from Aster yellows witches'-broom phytoplasma (strain AYWB).